We begin with the raw amino-acid sequence, 160 residues long: MD-2-related lipid-recognition protein ROSY1 (160 aa).

An N-terminal signal peptide occupies residues 1–23; it reads MAISHTQLLLLLLVSLFFSPALC.

As to quaternary structure, interacts with SYT1. Expressed exclusively in roots, in epidermis and cortex cells of the root elongation zone, and lateral root cap cells at the root tip.

It is found in the cytoplasm. In terms of biological role, involved in the regulation of gravitropic response and basipetal auxin transport in roots. Involved in salt stress tolerance. May facilitate membrane trafficking and asymmetric cell elongation via SYT1. Binds stigmasterol and dipalmitoyl phosphoethanolamine (DPPE) in vitro. This is MD-2-related lipid-recognition protein ROSY1 from Arabidopsis thaliana (Mouse-ear cress).